The following is a 66-amino-acid chain: Large ribosomal subunit protein bL35 (66 aa).

Basic residues predominate over residues 1–26 (MPKMKTHRGSAKRFKKTGSGKLKRSH). The interval 1 to 48 (MPKMKTHRGSAKRFKKTGSGKLKRSHAYTSHLFANKSQKQKRKLRKSA) is disordered.

Belongs to the bacterial ribosomal protein bL35 family.

The sequence is that of Large ribosomal subunit protein bL35 from Bacillus licheniformis (strain ATCC 14580 / DSM 13 / JCM 2505 / CCUG 7422 / NBRC 12200 / NCIMB 9375 / NCTC 10341 / NRRL NRS-1264 / Gibson 46).